The following is a 204-amino-acid chain: GTP cyclohydrolase 1 (204 aa).

Zn(2+) is bound by residues Cys92, His95, and Cys165.

It belongs to the GTP cyclohydrolase I family. In terms of assembly, homomer.

The enzyme catalyses GTP + H2O = 7,8-dihydroneopterin 3'-triphosphate + formate + H(+). It functions in the pathway cofactor biosynthesis; 7,8-dihydroneopterin triphosphate biosynthesis; 7,8-dihydroneopterin triphosphate from GTP: step 1/1. This chain is GTP cyclohydrolase 1, found in Mycobacteroides abscessus (strain ATCC 19977 / DSM 44196 / CCUG 20993 / CIP 104536 / JCM 13569 / NCTC 13031 / TMC 1543 / L948) (Mycobacterium abscessus).